Consider the following 95-residue polypeptide: Small ribosomal subunit protein bS6 (95 aa).

Belongs to the bacterial ribosomal protein bS6 family.

In terms of biological role, binds together with bS18 to 16S ribosomal RNA. This chain is Small ribosomal subunit protein bS6, found in Clostridium perfringens (strain ATCC 13124 / DSM 756 / JCM 1290 / NCIMB 6125 / NCTC 8237 / Type A).